A 634-amino-acid chain; its full sequence is Replication protein E1 (634 aa).

Positions K84–K86 match the Nuclear localization signal motif. S90 is modified (phosphoserine; by host). Positions Q91 to Q115 are enriched in polar residues. The interval Q91–G128 is disordered. Residues A172–D338 are DNA-binding region. The SF3 helicase domain occupies V437–V587. G463–S470 serves as a coordination point for ATP.

Belongs to the papillomaviridae E1 protein family. As to quaternary structure, can form hexamers. Interacts with E2 protein; this interaction increases E1 DNA binding specificity. Interacts with host DNA polymerase subunit POLA2. Interacts with host single stranded DNA-binding protein RPA1. Interacts with host TOP1; this interaction stimulates the enzymatic activity of TOP1. Phosphorylated.

The protein localises to the host nucleus. The enzyme catalyses Couples ATP hydrolysis with the unwinding of duplex DNA by translocating in the 3'-5' direction.. It catalyses the reaction ATP + H2O = ADP + phosphate + H(+). In terms of biological role, ATP-dependent DNA 3'-5' helicase required for initiation of viral DNA replication. It forms a complex with the viral E2 protein. The E1-E2 complex binds to the replication origin which contains binding sites for both proteins. During the initial step, a dimer of E1 interacts with a dimer of protein E2 leading to a complex that binds the viral origin of replication with high specificity. Then, a second dimer of E1 displaces the E2 dimer in an ATP-dependent manner to form the E1 tetramer. Following this, two E1 monomers are added to each half of the site, which results in the formation of two E1 trimers on the viral ori. Subsequently, two hexamers will be created. The double hexamer acts as a bi-directional helicase machinery and unwinds the viral DNA and then recruits the host DNA polymerase to start replication. The protein is Replication protein E1 of Human papillomavirus 69.